A 144-amino-acid polypeptide reads, in one-letter code: Apidaecins type 22 (144 aa).

The first 19 residues, 1–19, serve as a signal peptide directing secretion; the sequence is MKNFALAILVVTFVVAVFG. 4 propeptides span residues 20–42, 63–70, 91–98, and 119–126; these read NTNL…EAEP and EAEPEAEP. Residues 20–144 are disordered; the sequence is NTNLDPPTRP…PQPRPPHPRI (125 aa). Pro residues predominate over residues 134–144; that stretch reads IPQPRPPHPRI.

It belongs to the apidaecin family.

The protein localises to the secreted. Functionally, apidaecins have bactericidal activity; predominantly against Gram-negative bacteria. They seem to interfere with cell propagation. The chain is Apidaecins type 22 from Apis mellifera (Honeybee).